A 159-amino-acid polypeptide reads, in one-letter code: Na(+)/H(+) antiporter subunit E1 (159 aa).

Transmembrane regions (helical) follow at residues 1–21, 27–47, 49–69, and 101–121; these read MAVQ…VTNS, FVLG…VLPG, FYVI…IELI, and WQIV…VLGV.

Belongs to the CPA3 antiporters (TC 2.A.63) subunit E family. As to quaternary structure, may form a heterooligomeric complex that consists of seven subunits: mnhA1, mnhB1, mnhC1, mnhD1, mnhE1, mnhF1 and mnhG1.

It is found in the cell membrane. Mnh complex is a Na(+)/H(+) antiporter involved in Na(+) excretion. This chain is Na(+)/H(+) antiporter subunit E1 (mnhE1), found in Staphylococcus aureus (strain Mu3 / ATCC 700698).